A 72-amino-acid chain; its full sequence is Large ribosomal subunit protein bL31 (72 aa).

This sequence belongs to the bacterial ribosomal protein bL31 family. Type A subfamily. As to quaternary structure, part of the 50S ribosomal subunit.

In terms of biological role, binds the 23S rRNA. The sequence is that of Large ribosomal subunit protein bL31 from Maricaulis maris (strain MCS10) (Caulobacter maris).